The primary structure comprises 259 residues: Tryptophan synthase alpha chain (259 aa).

Residues Glu-52 and Asp-63 each act as proton acceptor in the active site.

The protein belongs to the TrpA family. Tetramer of two alpha and two beta chains.

The catalysed reaction is (1S,2R)-1-C-(indol-3-yl)glycerol 3-phosphate + L-serine = D-glyceraldehyde 3-phosphate + L-tryptophan + H2O. Its pathway is amino-acid biosynthesis; L-tryptophan biosynthesis; L-tryptophan from chorismate: step 5/5. The alpha subunit is responsible for the aldol cleavage of indoleglycerol phosphate to indole and glyceraldehyde 3-phosphate. The chain is Tryptophan synthase alpha chain from Streptococcus gordonii (strain Challis / ATCC 35105 / BCRC 15272 / CH1 / DL1 / V288).